We begin with the raw amino-acid sequence, 194 residues long: Peptidyl-tRNA hydrolase (194 aa).

Tyr17 is a binding site for tRNA. Catalysis depends on His22, which acts as the Proton acceptor. Residues Tyr68, Asn70, and Asn116 each coordinate tRNA.

This sequence belongs to the PTH family. Monomer.

The protein resides in the cytoplasm. The catalysed reaction is an N-acyl-L-alpha-aminoacyl-tRNA + H2O = an N-acyl-L-amino acid + a tRNA + H(+). In terms of biological role, hydrolyzes ribosome-free peptidyl-tRNAs (with 1 or more amino acids incorporated), which drop off the ribosome during protein synthesis, or as a result of ribosome stalling. Functionally, catalyzes the release of premature peptidyl moieties from peptidyl-tRNA molecules trapped in stalled 50S ribosomal subunits, and thus maintains levels of free tRNAs and 50S ribosomes. In Pseudomonas savastanoi pv. phaseolicola (strain 1448A / Race 6) (Pseudomonas syringae pv. phaseolicola (strain 1448A / Race 6)), this protein is Peptidyl-tRNA hydrolase.